Here is a 129-residue protein sequence, read N- to C-terminus: Small ribosomal subunit protein uS11 (129 aa).

The protein belongs to the universal ribosomal protein uS11 family. Part of the 30S ribosomal subunit. Interacts with proteins S7 and S18. Binds to IF-3.

Functionally, located on the platform of the 30S subunit, it bridges several disparate RNA helices of the 16S rRNA. Forms part of the Shine-Dalgarno cleft in the 70S ribosome. This chain is Small ribosomal subunit protein uS11, found in Macrococcus caseolyticus (strain JCSC5402) (Macrococcoides caseolyticum).